The following is a 198-amino-acid chain: Small ribosomal subunit protein uS4 (198 aa).

In terms of domain architecture, S4 RNA-binding spans 91–154 (SRLDNVVYRL…KNLNIVQEAV (64 aa)).

It belongs to the universal ribosomal protein uS4 family. As to quaternary structure, part of the 30S ribosomal subunit. Contacts protein S5. The interaction surface between S4 and S5 is involved in control of translational fidelity.

Its function is as follows. One of the primary rRNA binding proteins, it binds directly to 16S rRNA where it nucleates assembly of the body of the 30S subunit. With S5 and S12 plays an important role in translational accuracy. This chain is Small ribosomal subunit protein uS4, found in Onion yellows phytoplasma (strain OY-M).